The chain runs to 216 residues: MLLFIDTANVDEIRAANALGVIAGVTTNPSLIAREGRDFAEVVKEITSIVDGPISAEVISLDAEGMMKEAVELAAIHPNIVIKIPMTTEGLKATRACMEKGIKTNVTLIFSANQALLAARAGATYVSPFVGRLDDIGQDGIGLIYDIADIFNNYDLATQIISASIRHPLHVQQSAKAGAHIATVPYKVLLQMAKHPLTDKGIDAFLADWAKLTPKA.

Lys-83 (schiff-base intermediate with substrate) is an active-site residue.

The protein belongs to the transaldolase family. Type 3B subfamily.

The protein resides in the cytoplasm. The enzyme catalyses D-sedoheptulose 7-phosphate + D-glyceraldehyde 3-phosphate = D-erythrose 4-phosphate + beta-D-fructose 6-phosphate. It participates in carbohydrate degradation; pentose phosphate pathway; D-glyceraldehyde 3-phosphate and beta-D-fructose 6-phosphate from D-ribose 5-phosphate and D-xylulose 5-phosphate (non-oxidative stage): step 2/3. Functionally, transaldolase is important for the balance of metabolites in the pentose-phosphate pathway. This Desulforamulus reducens (strain ATCC BAA-1160 / DSM 100696 / MI-1) (Desulfotomaculum reducens) protein is Probable transaldolase.